A 126-amino-acid chain; its full sequence is Putative esterase ComA2 (126 aa).

Belongs to the thioesterase PaaI family.

Functionally, is not required for competence. The protein is Putative esterase ComA2 (yuxO) of Bacillus subtilis (strain 168).